A 408-amino-acid polypeptide reads, in one-letter code: Succinylornithine transaminase (408 aa).

An N6-(pyridoxal phosphate)lysine modification is found at Lys-252.

It belongs to the class-III pyridoxal-phosphate-dependent aminotransferase family. AstC subfamily. Pyridoxal 5'-phosphate is required as a cofactor.

It catalyses the reaction N(2)-succinyl-L-ornithine + 2-oxoglutarate = N-succinyl-L-glutamate 5-semialdehyde + L-glutamate. It functions in the pathway amino-acid degradation; L-arginine degradation via AST pathway; L-glutamate and succinate from L-arginine: step 3/5. Its function is as follows. Catalyzes the transamination of N(2)-succinylornithine and alpha-ketoglutarate into N(2)-succinylglutamate semialdehyde and glutamate. Can also act as an acetylornithine aminotransferase. This is Succinylornithine transaminase from Salmonella agona (strain SL483).